The primary structure comprises 231 residues: Orotidine 5'-phosphate decarboxylase (231 aa).

Substrate is bound by residues Asp-11, Lys-33, 60-69 (DLKLHDIPNT), Thr-117, Arg-179, Gln-187, Gly-207, and Arg-208. The active-site Proton donor is the Lys-62.

It belongs to the OMP decarboxylase family. Type 1 subfamily. In terms of assembly, homodimer.

The enzyme catalyses orotidine 5'-phosphate + H(+) = UMP + CO2. It functions in the pathway pyrimidine metabolism; UMP biosynthesis via de novo pathway; UMP from orotate: step 2/2. Functionally, catalyzes the decarboxylation of orotidine 5'-monophosphate (OMP) to uridine 5'-monophosphate (UMP). This chain is Orotidine 5'-phosphate decarboxylase, found in Ehrlichia chaffeensis (strain ATCC CRL-10679 / Arkansas).